A 136-amino-acid polypeptide reads, in one-letter code: Large ribosomal subunit protein uL16 (136 aa).

The protein belongs to the universal ribosomal protein uL16 family. In terms of assembly, part of the 50S ribosomal subunit.

Functionally, binds 23S rRNA and is also seen to make contacts with the A and possibly P site tRNAs. In Ehrlichia ruminantium (strain Gardel), this protein is Large ribosomal subunit protein uL16.